We begin with the raw amino-acid sequence, 662 residues long: Glutathione hydrolase 7 (662 aa).

Over 1-106 (MAAENEASQE…AAECSCRQDG (106 aa)) the chain is Cytoplasmic. Residues S17, S72, S79, and S83 each carry the phosphoserine modification. Residues 26–90 (SFPRLPEDEP…DGSPLRETRK (65 aa)) are disordered. The segment covering 72 to 83 (SSSSEMGSQDGS) has biased composition (low complexity). A helical; Signal-anchor for type II membrane protein membrane pass occupies residues 107–127 (LTVIVTACLTFATGVTVALVM). At 128–662 (QIYFGDPQIF…SLDATGASIL (535 aa)) the chain is on the extracellular side. N198, N267, N283, N330, N353, N394, N519, N523, and N586 each carry an N-linked (GlcNAc...) asparagine glycan.

It belongs to the gamma-glutamyltransferase family. As to quaternary structure, heterodimer composed of the light and heavy chains. The active site is located in the light chain. Post-translationally, cleaved by autocatalysis into a large and a small subunit and the autocatalytic cleavage is essential to the functional activation of the enzyme.

The protein localises to the membrane. The catalysed reaction is an N-terminal (5-L-glutamyl)-[peptide] + an alpha-amino acid = 5-L-glutamyl amino acid + an N-terminal L-alpha-aminoacyl-[peptide]. The enzyme catalyses glutathione + H2O = L-cysteinylglycine + L-glutamate. It catalyses the reaction an S-substituted glutathione + H2O = an S-substituted L-cysteinylglycine + L-glutamate. It participates in sulfur metabolism; glutathione metabolism. Functionally, hydrolyzes and transfers gamma-glutamyl moieties from glutathione and other gamma-glutamyl compounds to acceptors. This is Glutathione hydrolase 7 from Rattus norvegicus (Rat).